Here is a 144-residue protein sequence, read N- to C-terminus: Large ribosomal subunit protein uL15 (144 aa).

Residues 1–48 form a disordered region; it reads MQLNNLKPAAGSKHAKRRVGRGIGSGLGKTAGRGHKGQKSRSGGFHKV. Residues 21 to 31 show a composition bias toward gly residues; sequence RGIGSGLGKTA.

Belongs to the universal ribosomal protein uL15 family. As to quaternary structure, part of the 50S ribosomal subunit.

In terms of biological role, binds to the 23S rRNA. The polypeptide is Large ribosomal subunit protein uL15 (Cupriavidus taiwanensis (strain DSM 17343 / BCRC 17206 / CCUG 44338 / CIP 107171 / LMG 19424 / R1) (Ralstonia taiwanensis (strain LMG 19424))).